The sequence spans 238 residues: Ribonuclease PH (238 aa).

Phosphate-binding positions include Arg-86 and 124–126; that span reads GTR.

It belongs to the RNase PH family. Homohexameric ring arranged as a trimer of dimers.

The enzyme catalyses tRNA(n+1) + phosphate = tRNA(n) + a ribonucleoside 5'-diphosphate. In terms of biological role, phosphorolytic 3'-5' exoribonuclease that plays an important role in tRNA 3'-end maturation. Removes nucleotide residues following the 3'-CCA terminus of tRNAs; can also add nucleotides to the ends of RNA molecules by using nucleoside diphosphates as substrates, but this may not be physiologically important. Probably plays a role in initiation of 16S rRNA degradation (leading to ribosome degradation) during starvation. The chain is Ribonuclease PH from Chelativorans sp. (strain BNC1).